A 206-amino-acid polypeptide reads, in one-letter code: Large ribosomal subunit protein uL4 (206 aa).

It belongs to the universal ribosomal protein uL4 family. In terms of assembly, part of the 50S ribosomal subunit.

In terms of biological role, one of the primary rRNA binding proteins, this protein initially binds near the 5'-end of the 23S rRNA. It is important during the early stages of 50S assembly. It makes multiple contacts with different domains of the 23S rRNA in the assembled 50S subunit and ribosome. Its function is as follows. Forms part of the polypeptide exit tunnel. The chain is Large ribosomal subunit protein uL4 from Cereibacter sphaeroides (strain KD131 / KCTC 12085) (Rhodobacter sphaeroides).